A 170-amino-acid chain; its full sequence is Shikimate kinase (170 aa).

11 to 16 lines the ATP pocket; it reads LSGKST. Residue Ser-15 coordinates Mg(2+). Residues Asp-33, Arg-57, and Gly-79 each contribute to the substrate site. Arg-119 lines the ATP pocket. Arg-137 contacts substrate.

It belongs to the shikimate kinase family. In terms of assembly, monomer. Mg(2+) is required as a cofactor.

It is found in the cytoplasm. It carries out the reaction shikimate + ATP = 3-phosphoshikimate + ADP + H(+). Its pathway is metabolic intermediate biosynthesis; chorismate biosynthesis; chorismate from D-erythrose 4-phosphate and phosphoenolpyruvate: step 5/7. In terms of biological role, catalyzes the specific phosphorylation of the 3-hydroxyl group of shikimic acid using ATP as a cosubstrate. The protein is Shikimate kinase of Clostridium botulinum (strain Okra / Type B1).